Here is a 351-residue protein sequence, read N- to C-terminus: Pentatricopeptide repeat-containing protein At2g40240, mitochondrial (351 aa).

A mitochondrion-targeting transit peptide spans Met1–Phe27. 6 PPR repeats span residues Arg106–Leu140, Thr141–Met175, Asp176–Pro210, Asp211–Val245, Leu246–Leu280, and Asp281–Met315.

The protein belongs to the PPR family. P subfamily.

It localises to the mitochondrion. This Arabidopsis thaliana (Mouse-ear cress) protein is Pentatricopeptide repeat-containing protein At2g40240, mitochondrial.